A 715-amino-acid chain; its full sequence is Fatty acid oxidation complex subunit alpha (715 aa).

Residues 1–190 (MTTTSAFMLN…KAGLVDDVVP (190 aa)) form an enoyl-CoA hydratase region. The 3-hydroxyacyl-CoA dehydrogenase stretch occupies residues 306–714 (GPLNSVGILG…FWTNGETDQG (409 aa)).

This sequence in the N-terminal section; belongs to the enoyl-CoA hydratase/isomerase family. The protein in the central section; belongs to the 3-hydroxyacyl-CoA dehydrogenase family. Heterotetramer of two alpha chains (FadJ) and two beta chains (FadI).

The protein resides in the cytoplasm. The catalysed reaction is a (3S)-3-hydroxyacyl-CoA = a (2E)-enoyl-CoA + H2O. The enzyme catalyses a 4-saturated-(3S)-3-hydroxyacyl-CoA = a (3E)-enoyl-CoA + H2O. It catalyses the reaction a (3S)-3-hydroxyacyl-CoA + NAD(+) = a 3-oxoacyl-CoA + NADH + H(+). It carries out the reaction (3S)-3-hydroxybutanoyl-CoA = (3R)-3-hydroxybutanoyl-CoA. Its pathway is lipid metabolism; fatty acid beta-oxidation. Catalyzes the formation of a hydroxyacyl-CoA by addition of water on enoyl-CoA. Also exhibits 3-hydroxyacyl-CoA epimerase and 3-hydroxyacyl-CoA dehydrogenase activities. In Salmonella typhimurium (strain LT2 / SGSC1412 / ATCC 700720), this protein is Fatty acid oxidation complex subunit alpha.